We begin with the raw amino-acid sequence, 504 residues long: Activin receptor type-1-like (504 aa).

Residues 1–20 (MTLGIFRRVFLMLSVALGLT) form the signal peptide. Topologically, residues 21–121 (KGDLVKPSRG…EEPEVDAHLP (101 aa)) are extracellular. N34 carries an N-linked (GlcNAc...) asparagine glycan. Disulfide bonds link C35–C52, C37–C42, and C47–C70. A mediates specificity for BMP ligand region spans residues 74–77 (NQEL). Cystine bridges form between C78-C90 and C91-C96. The N-linked (GlcNAc...) asparagine glycan is linked to N99. Residues 122-142 (LILGPVLALLVLVALGTLGLW) traverse the membrane as a helical segment. The Cytoplasmic portion of the chain corresponds to 143–504 (RVRRRQEKQR…QNPEKPKVIH (362 aa)). S156, S161, and S162 each carry phosphoserine. The 30-residue stretch at 173–202 (SMLGDFLVSDCTTGSGSGLPFLVQRTVARQ) folds into the GS domain. The region spanning 203 to 504 (VALVECVGKG…QNPEKPKVIH (302 aa)) is the Protein kinase domain. ATP is bound by residues 209-217 (VGKGRYGEV) and K230. Catalysis depends on D331, which acts as the Proton acceptor.

It belongs to the protein kinase superfamily. TKL Ser/Thr protein kinase family. TGFB receptor subfamily. As to quaternary structure, interacts with TSC22D1/TSC-22. Mg(2+) serves as cofactor. The cofactor is Mn(2+). As to expression, urogenital ridge, testis, ovary, brain and lung. In lung, found exclusively in pulmonary vessels of all sizes. Also expressed in aorta, vena cava and certain blood vessels of kidney, spleen, heart and intestine. For most blood vessels, a higher level of expression is found in endothelium than in adjacent smooth muscle.

The protein localises to the cell membrane. It catalyses the reaction L-threonyl-[receptor-protein] + ATP = O-phospho-L-threonyl-[receptor-protein] + ADP + H(+). The catalysed reaction is L-seryl-[receptor-protein] + ATP = O-phospho-L-seryl-[receptor-protein] + ADP + H(+). Functionally, type I receptor for TGF-beta family ligands BMP9/GDF2 and BMP10 and important regulator of normal blood vessel development. On ligand binding, forms a receptor complex consisting of two type II and two type I transmembrane serine/threonine kinases. Type II receptors phosphorylate and activate type I receptors which autophosphorylate, then bind and activate SMAD transcriptional regulators. May bind activin as well. This is Activin receptor type-1-like (Acvrl1) from Rattus norvegicus (Rat).